The following is a 230-amino-acid chain: Extracellular ribonuclease LE (230 aa).

A signal peptide spans 1 to 25; sequence MASNSAFSLFLILLIITQCLSVLNA. RNA is bound at residue glutamine 37. 5 cysteine pairs are disulfide-bonded: cysteine 43–cysteine 49, cysteine 50–cysteine 106, cysteine 79–cysteine 125, cysteine 186–cysteine 221, and cysteine 202–cysteine 213. Residues histidine 64, phenylalanine 114, 117–118, and 121–122 contribute to the RNA site; these read HE and KH. Histidine 64 functions as the Proton donor in the catalytic mechanism. Residue glutamate 118 is part of the active site. Histidine 122 acts as the Proton acceptor in catalysis.

The protein belongs to the RNase T2 family.

It localises to the secreted. The protein resides in the extracellular space. The protein localises to the cell wall. The catalysed reaction is a ribonucleotidyl-ribonucleotide-RNA + H2O = a 3'-end 3'-phospho-ribonucleotide-RNA + a 5'-end dephospho-ribonucleoside-RNA + H(+). Its function is as follows. Probably involved in plant phosphate-starvation rescue system. The polypeptide is Extracellular ribonuclease LE (Solanum lycopersicum (Tomato)).